The sequence spans 430 residues: Synaptotagmin-11 (430 aa).

Residues 1-15 are Vesicular-facing; the sequence is MAEITNIRPSFDVSP. The helical transmembrane segment at 16-36 threads the bilayer; the sequence is VAAGLIGASVLVVCVSVTVFV. Residues 37-430 lie on the Cytoplasmic side of the membrane; it reads WTCCHQQAEK…VAKWHSLSEY (394 aa). A disordered region spans residues 132 to 154; sequence RSPMTSLTPGESKPTSPSSPEED. The residue at position 133 (S133) is a Phosphoserine. Residues 140–150 show a composition bias toward low complexity; the sequence is PGESKPTSPSS. C2 domains lie at 156–278 and 290–425; these read MLGS…QLTR and SRGE…AKWH. Positions 249, 252, and 255 each coordinate Ca(2+).

The protein belongs to the synaptotagmin family. As to quaternary structure, homodimer. Can also form heterodimers. Interacts with PRKN. Interacts (via C2 2 domain) with AGO2 and SND1; the interaction with SND1 is direct. Interacts with KIF1A; the interaction increases in presence of calcium. It depends on Ca(2+) as a cofactor. Ubiquitinated, at least by PRKN, and targeted to the proteasome complex for degradation. Ubiquitination is inhibited by ATP13A2. In terms of tissue distribution, highly expressed in brain and at lower levels in other tissues.

The protein localises to the cytoplasmic vesicle membrane. The protein resides in the perikaryon. It is found in the golgi apparatus. Its subcellular location is the trans-Golgi network membrane. It localises to the recycling endosome membrane. The protein localises to the lysosome membrane. The protein resides in the cytoplasmic vesicle. It is found in the phagosome. Its subcellular location is the cell projection. It localises to the axon. The protein localises to the dendrite. The protein resides in the postsynaptic density. It is found in the clathrin-coated vesicle membrane. Its function is as follows. Synaptotagmin family member involved in vesicular and membrane trafficking which does not bind Ca(2+). Inhibits clathrin-mediated and bulk endocytosis in neurons, functions to ensure precision in vesicle retrieval. Plays an important role in dopamine transmission by regulating endocytosis and the vesicle-recycling process. Essential component of a neuronal vesicular trafficking pathway that differs from the synaptic vesicle trafficking pathway but is crucial for development and synaptic plasticity. In macrophages and microglia, inhibits the conventional cytokine secretion, of at least IL6 and TNF, and phagocytosis. In astrocytes, regulates lysosome exocytosis, mechanism required for the repair of injured astrocyte cell membrane. Required for the ATP13A2-mediated regulation of the autophagy-lysosome pathway. The sequence is that of Synaptotagmin-11 from Rattus norvegicus (Rat).